The sequence spans 500 residues: Citrate lyase alpha chain (500 aa).

In terms of assembly, oligomer with a subunit composition of (alpha,beta,gamma)6.

The protein localises to the cytoplasm. The enzyme catalyses citrate = oxaloacetate + acetate. The catalysed reaction is citrate + acetyl-CoA = (3S)-citryl-CoA + acetate. In terms of biological role, represents a citrate:acetyl-ACP transferase. This chain is Citrate lyase alpha chain (citF), found in Haemophilus influenzae (strain ATCC 51907 / DSM 11121 / KW20 / Rd).